The chain runs to 110 residues: Endoribonuclease SymE (110 aa).

Residues 29-74 (SRYPDYTRIPALTMKGQWLEAAGFATGTEVDVRVMNGCIVLTAQQP) enclose the SpoVT-AbrB domain.

This sequence belongs to the SymE family.

The protein resides in the cytoplasm. In terms of biological role, involved in the degradation and recycling of damaged RNA. It is itself a target for degradation by the ATP-dependent protease Lon. The chain is Endoribonuclease SymE from Salmonella heidelberg (strain SL476).